The following is a 341-amino-acid chain: L-threonine 3-dehydrogenase (341 aa).

Cysteine 38 serves as a coordination point for Zn(2+). Active-site charge relay system residues include threonine 40 and histidine 43. Zn(2+)-binding residues include histidine 63, glutamate 64, cysteine 93, cysteine 96, cysteine 99, and cysteine 107. Residues isoleucine 175, aspartate 195, arginine 200, 262 to 264, and 286 to 287 each bind NAD(+); these read LGI and IY.

This sequence belongs to the zinc-containing alcohol dehydrogenase family. Homotetramer. It depends on Zn(2+) as a cofactor.

The protein localises to the cytoplasm. The catalysed reaction is L-threonine + NAD(+) = (2S)-2-amino-3-oxobutanoate + NADH + H(+). Its pathway is amino-acid degradation; L-threonine degradation via oxydo-reductase pathway; glycine from L-threonine: step 1/2. In terms of biological role, catalyzes the NAD(+)-dependent oxidation of L-threonine to 2-amino-3-ketobutyrate. The sequence is that of L-threonine 3-dehydrogenase from Escherichia coli (strain K12 / MC4100 / BW2952).